A 193-amino-acid chain; its full sequence is 7-methyl-GTP pyrophosphatase (193 aa).

Aspartate 68 (proton acceptor) is an active-site residue.

The protein belongs to the Maf family. YceF subfamily. It depends on a divalent metal cation as a cofactor.

Its subcellular location is the cytoplasm. The enzyme catalyses N(7)-methyl-GTP + H2O = N(7)-methyl-GMP + diphosphate + H(+). Nucleoside triphosphate pyrophosphatase that hydrolyzes 7-methyl-GTP (m(7)GTP). May have a dual role in cell division arrest and in preventing the incorporation of modified nucleotides into cellular nucleic acids. This Chromobacterium violaceum (strain ATCC 12472 / DSM 30191 / JCM 1249 / CCUG 213 / NBRC 12614 / NCIMB 9131 / NCTC 9757 / MK) protein is 7-methyl-GTP pyrophosphatase.